The sequence spans 46 residues: Myoregulin (46 aa).

At 1 to 21 (MTGKNWILISTTTPKSLEDEI) the chain is on the cytoplasmic side. The helical transmembrane segment at 22-42 (VGRLLKILFVIFVDLISIIYV) threads the bilayer. The Lumenal segment spans residues 43-46 (VITS).

In terms of assembly, homooligomer. Monomer. Interacts with ATP2A1/SERCA1. Interacts as a monomer with ATP2A2/SERCA2; the interaction inhibits ATP2A2 activity.

It localises to the sarcoplasmic reticulum membrane. Functionally, inhibits the activity of ATP2A1/SERCA1 ATPase in sarcoplasmic reticulum by decreasing the apparent affinity of the ATPase for Ca(2+), thereby acting as a key regulator of skeletal muscle activity. Its high expression in adult skeletal muscle, suggests that it constitutes the predominant regulator of ATP2A1/SERCA1 in adult skeletal muscle. Also inhibits the activity of ATP2A2/SERCA2 and ATP2A3/SERCA3. This is Myoregulin from Homo sapiens (Human).